Consider the following 218-residue polypeptide: Large ribosomal subunit protein uL4 (218 aa).

Residues Ala46–Ala100 form a disordered region. Over residues Gly62–Gly73 the composition is skewed to basic residues.

This sequence belongs to the universal ribosomal protein uL4 family. In terms of assembly, part of the 50S ribosomal subunit.

Its function is as follows. One of the primary rRNA binding proteins, this protein initially binds near the 5'-end of the 23S rRNA. It is important during the early stages of 50S assembly. It makes multiple contacts with different domains of the 23S rRNA in the assembled 50S subunit and ribosome. In terms of biological role, forms part of the polypeptide exit tunnel. The chain is Large ribosomal subunit protein uL4 from Corynebacterium efficiens (strain DSM 44549 / YS-314 / AJ 12310 / JCM 11189 / NBRC 100395).